The primary structure comprises 239 residues: Protein GrpE (239 aa).

2 disordered regions span residues 1 to 53 and 210 to 239; these read MIEE…EDLK and GPGQQISQESEEKDKVDKDIDSEGSISEEN. Composition is skewed to basic and acidic residues over residues 34–53 and 219–230; these read NEDKKLPDDNNEKIDAEDLK and SEEKDKVDKDID.

The protein belongs to the GrpE family. Homodimer.

Its subcellular location is the cytoplasm. Its function is as follows. Participates actively in the response to hyperosmotic and heat shock by preventing the aggregation of stress-denatured proteins, in association with DnaK and GrpE. It is the nucleotide exchange factor for DnaK and may function as a thermosensor. Unfolded proteins bind initially to DnaJ; upon interaction with the DnaJ-bound protein, DnaK hydrolyzes its bound ATP, resulting in the formation of a stable complex. GrpE releases ADP from DnaK; ATP binding to DnaK triggers the release of the substrate protein, thus completing the reaction cycle. Several rounds of ATP-dependent interactions between DnaJ, DnaK and GrpE are required for fully efficient folding. In Prochlorococcus marinus (strain MIT 9515), this protein is Protein GrpE.